We begin with the raw amino-acid sequence, 1210 residues long: Multimerin-1 (1210 aa).

The N-terminal stretch at 1-19 (MLGLKFLVLLSILWGRVFR) is a signal peptide. Residues 57-102 (ATQNPSTQGPAAAERSSEDDVLLQSTSQPSETSTPPEGRHQTPLEK) are disordered. Residues 80-92 (QSTSQPSETSTPP) are compositionally biased toward low complexity. Asn133 is a glycosylation site (N-linked (GlcNAc...) asparagine). Positions 143–155 (SRKSDQQEVSTKS) are enriched in polar residues. The segment at 143-190 (SRKSDQQEVSTKSAGDMGNRSARETHLRRSDNSRNQRPSYQKPSFETT) is disordered. An N-linked (GlcNAc...) asparagine glycan is attached at Asn161. Residues 163 to 176 (SARETHLRRSDNSR) show a composition bias toward basic and acidic residues. Positions 177–189 (NQRPSYQKPSFET) are enriched in polar residues. Residues 192 to 267 (GKNWCAHVHT…PGYIGPNCQL (76 aa)) enclose the EMI domain. 3 disulfides stabilise this stretch: Cys196–Cys257, Cys222–Cys230, and Cys256–Cys265. A glycan (O-linked (Fuc) threonine) is linked at Thr201. Thr250 carries an O-linked (Fuc) threonine glycan. The segment at 276–299 (AHSNQAESHTAVDQGRAQQQKQDC) is disordered. Residues 303–338 (AMIQKLAEQLSQQERKLSLLQKKVDNASLVADDMRN) adopt a coiled-coil conformation. N-linked (GlcNAc...) asparagine glycosylation is found at Asn328, Asn415, Asn491, Asn525, Asn560, Asn602, Asn712, Asn765, Asn810, Asn822, Asn903, Asn915, Asn963, and Asn1000. Residues 564–690 (LLEMEKESAR…RHNLLRNEVQ (127 aa)) are a coiled coil. A coiled-coil region spans residues 809–846 (FNETTSQVNKCQQNMSHLEENMLSVTKTAKEFETRLQG). Residues 1023–1059 (EHSSCSSFPCQNGGTCISGRSNFICACRHPFMGDTCT) enclose the EGF-like domain. 3 disulfide bridges follow: Cys1027–Cys1038, Cys1032–Cys1047, and Cys1049–Cys1058. O-linked (Fuc) threonine glycosylation occurs at Thr1037. The region spanning 1078–1210 (RYAPMVAFFV…TFSGYLLYRT (133 aa)) is the C1q domain.

Multimeric. Composed of varying sized, disulfide-linked multimers, the smallest of which is a homotrimer. Proteolysis of the promultimerin in the N-terminal region, leads to the mature p155 form that is stored in platelets. Interacts with factor V/Va. In terms of processing, extensively N-glycosylated. Post-translationally, O-fucosylated within the EMI domain (at Thr-201 and Thr-250) by FUT10/POFUT3 and FUT11/POFUT4. O-fucosylation at Thr-201 and Thr-1037 are required for facilitating protein folding and secretion.

The protein resides in the secreted. Carrier protein for platelet (but not plasma) factor V/Va. Plays a role in the storage and stabilization of factor V in platelets. Upon release following platelet activation, may limit platelet and plasma factor Va-dependent thrombin generation. Ligand for integrin alpha-IIb/beta-3 and integrin alpha-V/beta-3 on activated platelets, and may function as an extracellular matrix or adhesive protein. The polypeptide is Multimerin-1 (Mus musculus (Mouse)).